The following is a 209-amino-acid chain: Large ribosomal subunit protein uL3 (209 aa).

The tract at residues 118-152 is disordered; sequence GFQGAIKRHGQSRGPMSHGSRYHRRPGSMGPVDPN.

Belongs to the universal ribosomal protein uL3 family. In terms of assembly, part of the 50S ribosomal subunit. Forms a cluster with proteins L14 and L19.

Its function is as follows. One of the primary rRNA binding proteins, it binds directly near the 3'-end of the 23S rRNA, where it nucleates assembly of the 50S subunit. This chain is Large ribosomal subunit protein uL3, found in Bacillus licheniformis (strain ATCC 14580 / DSM 13 / JCM 2505 / CCUG 7422 / NBRC 12200 / NCIMB 9375 / NCTC 10341 / NRRL NRS-1264 / Gibson 46).